A 207-amino-acid chain; its full sequence is MMIVIDYDAGNTANVLRALAQVRVEARLSADPQEILAADGLILPGVGAFPTAMQELERRGLVSVIQQAVADGKPLLGICLGMQLLLESGLENGQSSGLGLIPGVCRRIPDQAGLPVPHMGWNDLQMQQSSALTASLEGQSVYFVHSYYTDVPEEYLDVTADYGLPIPAMIHRGSVFGCQFHPEKSGAVGLGILEKFKEYVYENTARY.

The region spanning 1-206 (MMIVIDYDAG…KEYVYENTAR (206 aa)) is the Glutamine amidotransferase type-1 domain. Catalysis depends on C79, which acts as the Nucleophile. Active-site residues include H181 and E183.

Heterodimer of HisH and HisF.

The protein localises to the cytoplasm. It catalyses the reaction 5-[(5-phospho-1-deoxy-D-ribulos-1-ylimino)methylamino]-1-(5-phospho-beta-D-ribosyl)imidazole-4-carboxamide + L-glutamine = D-erythro-1-(imidazol-4-yl)glycerol 3-phosphate + 5-amino-1-(5-phospho-beta-D-ribosyl)imidazole-4-carboxamide + L-glutamate + H(+). The enzyme catalyses L-glutamine + H2O = L-glutamate + NH4(+). It functions in the pathway amino-acid biosynthesis; L-histidine biosynthesis; L-histidine from 5-phospho-alpha-D-ribose 1-diphosphate: step 5/9. In terms of biological role, IGPS catalyzes the conversion of PRFAR and glutamine to IGP, AICAR and glutamate. The HisH subunit catalyzes the hydrolysis of glutamine to glutamate and ammonia as part of the synthesis of IGP and AICAR. The resulting ammonia molecule is channeled to the active site of HisF. The polypeptide is Imidazole glycerol phosphate synthase subunit HisH (Streptococcus sanguinis (strain SK36)).